We begin with the raw amino-acid sequence, 449 residues long: Adenylosuccinate synthetase (449 aa).

GTP is bound by residues 37–43 (GDEGKGK) and 65–67 (GHT). Asp38 acts as the Proton acceptor in catalysis. 2 residues coordinate Mg(2+): Asp38 and Gly65. IMP-binding positions include 38–41 (DEGK), 63–66 (NAGH), Thr155, Arg169, Asn247, Thr262, and Arg326. The Proton donor role is filled by His66. Residue 322 to 328 (VTTKRKR) participates in substrate binding. GTP contacts are provided by residues Arg328, 354 to 356 (KLD), and 437 to 439 (GVG).

It belongs to the adenylosuccinate synthetase family. Homodimer. The cofactor is Mg(2+).

It is found in the cytoplasm. The enzyme catalyses IMP + L-aspartate + GTP = N(6)-(1,2-dicarboxyethyl)-AMP + GDP + phosphate + 2 H(+). Its pathway is purine metabolism; AMP biosynthesis via de novo pathway; AMP from IMP: step 1/2. Functionally, plays an important role in the de novo pathway and in the salvage pathway of purine nucleotide biosynthesis. Catalyzes the first committed step in the biosynthesis of AMP from IMP. The polypeptide is Adenylosuccinate synthetase (Drosophila willistoni (Fruit fly)).